Reading from the N-terminus, the 555-residue chain is Cytochrome P450 monooxygeanse terQ (555 aa).

A helical transmembrane segment spans residues 10–30 (VPAHAWPTITVAGAVMVVVLL). Residue cysteine 479 participates in heme binding. The interval 535–555 (DAGNTARVDPGAPDGVASEPS) is disordered.

Belongs to the cytochrome P450 family. It depends on heme as a cofactor.

The protein resides in the membrane. It functions in the pathway secondary metabolite biosynthesis. Functionally, cytochrome P450 monooxygeanse; part of the gene cluster that mediates the biosynthesis of terpendoles, indole-diterpene (IDT) mycotoxins including terpendole I, terpendole K, terpendole C, as well as the kinesin Eg5 inhibitor terpendole E. TerQ is a C11-hydroxylating enzyme that converts paspalline into terpendole E. Is also able to hydroxylate 13-desoxyterpendole I at C-13 to produce terpendole I. Terpendoles biosynthesis begins with the synthesis of geranylgeranyl diphosphate (GGPP) by a yet unidentified GGPP synthase. Condensation of indole-3-glycerol phosphate with GGPP by the prenyltransferase terC then forms 3-geranylgeranylindole (3-GGI), followed by epoxidation and cyclization of this intermediate (by the FAD-dependent monooxygeanse terM and the terpene cyclase terB) to form paspaline. The cytochrome monooxygenase terQ then hydroxylates paspalline at C-11 to yield terpendole E. The cytochrome monooxygenase terP converts terpendole E to 13-desoxyterpendole I, and terQ converts 13-desoxyterpendole I into terpendole I. TerF and terK are required for conversion of terpendole I to terpendole C which is further converted to terpendole K. This is Cytochrome P450 monooxygeanse terQ from Tolypocladium album (Soil fungus).